The sequence spans 98 residues: Large ribosomal subunit protein uL23 (98 aa).

It belongs to the universal ribosomal protein uL23 family. Part of the 50S ribosomal subunit. Contacts protein L29, and trigger factor when it is bound to the ribosome.

In terms of biological role, one of the early assembly proteins it binds 23S rRNA. One of the proteins that surrounds the polypeptide exit tunnel on the outside of the ribosome. Forms the main docking site for trigger factor binding to the ribosome. The protein is Large ribosomal subunit protein uL23 of Marinomonas sp. (strain MWYL1).